The chain runs to 769 residues: Multiple C2 domain and transmembrane region protein 5 (769 aa).

3 consecutive C2 domains span residues 23 to 143, 184 to 305, and 345 to 467; these read SVTG…PQWY, PEGV…SRWF, and YSSD…THSY. Aspartate 56, aspartate 62, aspartate 109, aspartate 111, and aspartate 116 together coordinate Ca(2+). A run of 2 helical transmembrane segments spans residues 604-624 and 712-732; these read IILV…LFLI and LFVL…FQVV.

This sequence belongs to the MCTP family. The cofactor is Ca(2+). Highly expressed in roots meristems and shoot apical meristems (SAMs). Observed in flowers.

The protein localises to the endoplasmic reticulum membrane. Its function is as follows. May function as a signaling molecule by regulating the trafficking of other regulators. The chain is Multiple C2 domain and transmembrane region protein 5 from Arabidopsis thaliana (Mouse-ear cress).